We begin with the raw amino-acid sequence, 1343 residues long: Spermatogenesis-associated protein 31A6 (1343 aa).

Residues 23–43 (PWVLDIFLTLVFALGFFFLLL) traverse the membrane as a helical segment. 6 disordered regions span residues 55–88 (PSPS…RECP), 106–235 (GPHL…STLI), 624–654 (DESP…EAQK), 895–951 (PRGI…REAV), 1080–1156 (VQEE…PPSV), and 1309–1331 (KAVS…SHHH). Positions 60-82 (GKRKCPVGRRRRPRGRMKNHSLR) are enriched in basic residues. Polar residues predominate over residues 165 to 178 (LASTPSPGPMTTSV). The span at 198-222 (PEPPALFPHPPHTPDPLACSPPPPK) shows a compositional bias: pro residues. Polar residues-rich tracts occupy residues 627-647 (PGTS…STGE) and 923-944 (LTYS…SSKA). Composition is skewed to basic and acidic residues over residues 1104–1123 (HKSE…RLEG) and 1133–1142 (RKTEDTHQDE).

It belongs to the SPATA31 family.

The protein resides in the membrane. May play a role in spermatogenesis. The polypeptide is Spermatogenesis-associated protein 31A6 (SPATA31A6) (Homo sapiens (Human)).